A 194-amino-acid chain; its full sequence is AN1-type zinc finger protein 2A (194 aa).

2 consecutive AN1-type zinc fingers follow at residues 4 to 52 (PDLG…QKDV) and 94 to 142 (KIFT…RPTI). Zn(2+) contacts are provided by C10, C15, C25, C28, C33, H36, H42, C44, C100, C105, C115, C118, C123, H126, H132, and C134. The interval 145–164 (GCSPVTASESKPSGDPHPGS) is disordered.

The protein localises to the cytoplasm. Its subcellular location is the nucleus. This is AN1-type zinc finger protein 2A (ZFAND2A) from Pongo abelii (Sumatran orangutan).